Reading from the N-terminus, the 75-residue chain is Probable protein BRICK1-A (75 aa).

A coiled-coil region spans residues 41 to 72 (MSCRSRLATLNEKLTALERRIEYIEARVTKGE).

The protein belongs to the BRK1 family.

Its subcellular location is the cytoplasm. The protein localises to the cytoskeleton. Involved in regulation of actin and microtubule organization. Part of a WAVE complex that activates the Arp2/3 complex. The sequence is that of Probable protein BRICK1-A (brk1-a) from Xenopus laevis (African clawed frog).